The following is a 282-amino-acid chain: F-actin-capping protein subunit beta (282 aa).

The tract at residues 73–103 (SPWSNQFDPPLDEAGSGGVGAGGNEGAGEGA) is disordered. Residues 87-101 (GSGGVGAGGNEGAGE) show a composition bias toward gly residues.

Belongs to the F-actin-capping protein beta subunit family. As to quaternary structure, component of the F-actin capping complex, composed of a heterodimer of an alpha and a beta subunit.

It localises to the cytoplasm. The protein resides in the cytoskeleton. The protein localises to the actin patch. F-actin-capping proteins bind in a Ca(2+)-independent manner to the fast growing ends of actin filaments (barbed end) thereby blocking the exchange of subunits at these ends. Unlike other capping proteins (such as gelsolin and severin), these proteins do not sever actin filaments. The sequence is that of F-actin-capping protein subunit beta (CAP2) from Gibberella zeae (strain ATCC MYA-4620 / CBS 123657 / FGSC 9075 / NRRL 31084 / PH-1) (Wheat head blight fungus).